The chain runs to 351 residues: Phospho-N-acetylmuramoyl-pentapeptide-transferase (351 aa).

The next 10 membrane-spanning stretches (helical) occupy residues 17-37 (TAYATIFAFLLALIFGPFIIS), 61-83 (MGIPTMGGVLIFFCVLVSLFFWI), 88-105 (IYFLIVLFVMVSFACLGF), 130-150 (ILFSFISVVMLYYFGGEHVSI), 158-178 (SLKLDLGILYIPFGMFVLISA), 190-210 (GLAIGLSIVVIGALIIIAYLT), 230-250 (LVIFLGALLGGSFGFLWFNAY), 254-274 (IMMGDTGSLSIGAVLGMVALI), 279-299 (ILFAILAGVFVVETLSVIIQV), and 328-348 (QVVIRFWIIGLIFAILALSTI).

The protein belongs to the glycosyltransferase 4 family. MraY subfamily. Requires Mg(2+) as cofactor.

It localises to the cell inner membrane. It catalyses the reaction UDP-N-acetyl-alpha-D-muramoyl-L-alanyl-gamma-D-glutamyl-meso-2,6-diaminopimeloyl-D-alanyl-D-alanine + di-trans,octa-cis-undecaprenyl phosphate = di-trans,octa-cis-undecaprenyl diphospho-N-acetyl-alpha-D-muramoyl-L-alanyl-D-glutamyl-meso-2,6-diaminopimeloyl-D-alanyl-D-alanine + UMP. Its pathway is cell wall biogenesis; peptidoglycan biosynthesis. Catalyzes the initial step of the lipid cycle reactions in the biosynthesis of the cell wall peptidoglycan: transfers peptidoglycan precursor phospho-MurNAc-pentapeptide from UDP-MurNAc-pentapeptide onto the lipid carrier undecaprenyl phosphate, yielding undecaprenyl-pyrophosphoryl-MurNAc-pentapeptide, known as lipid I. This is Phospho-N-acetylmuramoyl-pentapeptide-transferase from Borrelia duttonii (strain Ly).